We begin with the raw amino-acid sequence, 172 residues long: Ribosome maturation factor RimM (172 aa).

The region spanning 96–168 (DGEFYYHEII…RVQVELMEGL (73 aa)) is the PRC barrel domain.

Belongs to the RimM family. In terms of assembly, binds ribosomal protein uS19.

The protein localises to the cytoplasm. Functionally, an accessory protein needed during the final step in the assembly of 30S ribosomal subunit, possibly for assembly of the head region. Essential for efficient processing of 16S rRNA. May be needed both before and after RbfA during the maturation of 16S rRNA. It has affinity for free ribosomal 30S subunits but not for 70S ribosomes. This is Ribosome maturation factor RimM from Streptococcus agalactiae serotype Ia (strain ATCC 27591 / A909 / CDC SS700).